We begin with the raw amino-acid sequence, 101 residues long: Large ribosomal subunit protein uL24 (101 aa).

This sequence belongs to the universal ribosomal protein uL24 family. In terms of assembly, part of the 50S ribosomal subunit.

Its function is as follows. One of two assembly initiator proteins, it binds directly to the 5'-end of the 23S rRNA, where it nucleates assembly of the 50S subunit. Functionally, one of the proteins that surrounds the polypeptide exit tunnel on the outside of the subunit. The sequence is that of Large ribosomal subunit protein uL24 from Borrelia garinii subsp. bavariensis (strain ATCC BAA-2496 / DSM 23469 / PBi) (Borreliella bavariensis).